The sequence spans 314 residues: Olfactory receptor 6C6 (314 aa).

Residues 1-24 (MKNKSMEIEFILLGLTDDPQLQIV) are Extracellular-facing. The N-linked (GlcNAc...) asparagine glycan is linked to N3. Residues 25–45 (IFLFLFLNYTLSLMGNLIIII) traverse the membrane as a helical segment. Topologically, residues 46–63 (LTLLDPRLKTPMYFFLRN) are cytoplasmic. A helical transmembrane segment spans residues 64-84 (FSFLEVIFTTVCIPRFLITIV). At 85-95 (TRDKTISYNNC) the chain is on the extracellular side. A disulfide bridge links C95 with C177. A helical transmembrane segment spans residues 96-116 (ATQLFFILLPGVTEFYLLAAM). The Cytoplasmic segment spans residues 117 to 141 (SYDRYVAICKPLHYPIIMSSKVCYQ). The chain crosses the membrane as a helical span at residues 142–162 (LVLSSWVTGFLIIFPPLVMGL). Topologically, residues 163–199 (KLDFCASKTIDHFMCETSPILQISCTDTHVLELMSFT) are extracellular. Residues 200–220 (LAVVTLVVTLVLVILSYTCII) form a helical membrane-spanning segment. Topologically, residues 221–237 (KTILKFSSAQQRNKAFS) are cytoplasmic. Residues 238–258 (TCTSHMIVVSMTYGSCIFMYI) form a helical membrane-spanning segment. At 259-269 (KPSAKERVTVS) the chain is on the extracellular side. A helical transmembrane segment spans residues 270 to 290 (KGVALLYTSIAPLLNPFIYTL). Over 291 to 314 (RNQQVKEVFWDVLQKNLCFSKRPF) the chain is Cytoplasmic.

This sequence belongs to the G-protein coupled receptor 1 family.

It is found in the cell membrane. Its function is as follows. Odorant receptor. This is Olfactory receptor 6C6 (OR6C6) from Homo sapiens (Human).